Consider the following 429-residue polypeptide: Trigger factor (429 aa).

Positions 163 to 248 (GDFVVIDFVG…IKEIKVKETP (86 aa)) constitute a PPIase FKBP-type domain.

It belongs to the FKBP-type PPIase family. Tig subfamily.

It is found in the cytoplasm. The enzyme catalyses [protein]-peptidylproline (omega=180) = [protein]-peptidylproline (omega=0). Involved in protein export. Acts as a chaperone by maintaining the newly synthesized protein in an open conformation. Functions as a peptidyl-prolyl cis-trans isomerase. The sequence is that of Trigger factor from Halothermothrix orenii (strain H 168 / OCM 544 / DSM 9562).